The chain runs to 639 residues: MHGLLLAAGLLSLPLRALGHPNPNPQMHTLSRRGAVDLDAFRLGQNAEYSNTASVASNPPALSIRSTQSYVDVAKDLVKTTLPDATFRVVNDHYVGTNGVAHVHLRQTVHGIDVDNADFNVNVKDGKVFSFGNSFYKGKIPEENPMVKRDHADPVKALKGVVSALKLPVKTEKASAAISAQSQGQDAVVFKGTSGALSDPKGELVYLIKPDGELSLTWKVETDVGDNWLLSYIDAKDGKNIHGVVDYVADATYQVYPWGINDPTEGEREVFTDPWDGNASEFTWISDGRTRYPTTRGNNGIAQDNPSGGNQYENNYRPMSDDLRFEYPYSTDMSPPDSYIDASITQLFYTANVYHDLLYILGFTERAGNFEYNNNNQGGRGNDYVILNSQDGSGTNNANFATPPDGQPGRMRMYTWTTSRPNRDGSFEAGIVIHEYTHGLSNRLCGGPSNSRCLNALESGGMGEGWGDFMATAIRLKAGDTRETDYTMGEWAANQQGGIRQHPYSTNLQTNPLVYTTVNQYREVHDIGTVWASMLYEVLWNLIDKHGKNDGPKPELRDGVPTDGKYLTMKLVIDGMALQPCNPNFVQARDAILDADEALTGGENKCEIWAGFAKRELGTGARYDRSRRTGSTDVPQECQ.

A signal peptide spans 1–19 (MHGLLLAAGLLSLPLRALG). The propeptide occupies 20-250 (HPNPNPQMHT…IHGVVDYVAD (231 aa)). Asparagine 278 carries an N-linked (GlcNAc...) asparagine glycan. The segment at 293–312 (PTTRGNNGIAQDNPSGGNQY) is disordered. Histidine 434 contributes to the Zn(2+) binding site. Glutamate 435 is a catalytic residue. Histidine 438 is a binding site for Zn(2+).

The protein belongs to the peptidase M36 family. The cofactor is Zn(2+).

Its subcellular location is the secreted. Secreted metalloproteinase that allows assimilation of proteinaceous substrates and probably acts as a virulence factor. This chain is Extracellular metalloproteinase 9 (MEP9), found in Coccidioides posadasii (strain C735) (Valley fever fungus).